Reading from the N-terminus, the 126-residue chain is Putative regulator AldR (126 aa).

This sequence belongs to the RutC family.

In terms of biological role, implicated in the regulation of isoleucine biosynthesis. The sequence is that of Putative regulator AldR (aldR) from Lactococcus lactis subsp. lactis (strain IL1403) (Streptococcus lactis).